Here is a 31-residue protein sequence, read N- to C-terminus: Monocyclic monoterpene ketone monooxygenase (31 aa).

20-25 (GAGFXG) provides a ligand contact to FAD.

Monomer. Requires FAD as cofactor.

The enzyme catalyses 1-hydroxylimonen-2-one + NADPH + O2 = 3-isopropenyl-6-oxoheptanoate + NADP(+) + H2O. It carries out the reaction (1R,4S)-1-hydroxylimonen-2-one + NADPH + O2 + H(+) = (4S,7S)-7-hydroxy-4-isopropenyl-7-methyloxepan-2-one + NADP(+) + H2O. The catalysed reaction is (1S,4R)-1-hydroxylimonen-2-one + NADPH + O2 + H(+) = (4R,7R)-7-hydroxy-4-isopropenyl-7-methyloxepan-2-one + NADP(+) + H2O. It catalyses the reaction (1R,4R)-dihydrocarvone + NADPH + O2 + H(+) = (4R,7R)-4-isopropenyl-7-methyloxepan-2-one + NADP(+) + H2O. The enzyme catalyses (1S,4R)-menthone + NADPH + O2 + H(+) = (4S,7R)-7-isopropyl-4-methyloxepan-2-one + NADP(+) + H2O. It carries out the reaction (1R,4S)-menthone + NADPH + O2 + H(+) = (4R,7S)-7-isopropyl-4-methyloxepan-2-one + NADP(+) + H2O. The catalysed reaction is (1S,4R)-isodihydrocarvone + NADPH + O2 + H(+) = (3S,6R)-6-isopropenyl-3-methyloxepan-2-one + NADP(+) + H2O. It functions in the pathway terpene metabolism; monoterpene degradation. Catalyzes the NADPH- and oxygen-dependent oxidation of the monocyclic monoterpene ketones 1-hydroxy-2-oxolimonene, dihydrocarvone and menthone. Is able to convert all enantiomers of these natural substrates with almost equal efficiency. Is thus involved in the conversion of the monocyclic monoterpene ketone intermediates formed in the degradation pathways of all stereoisomers of three different monocyclic monoterpenes, i.e. limonene, (dihydro)carveol and menthol, which likely make R.erythropolis able to grow on these compounds as the sole source of carbon and energy. In Rhodococcus erythropolis (Arthrobacter picolinophilus), this protein is Monocyclic monoterpene ketone monooxygenase.